Consider the following 1074-residue polypeptide: Semaphorin-5A (1074 aa).

The first 22 residues, 1–22, serve as a signal peptide directing secretion; sequence MKGACILAWLFSSLGVWRLARP. One can recognise a Sema domain in the interval 35 to 484; the sequence is HPVVSYKEIG…LQEHVVKIPL (450 aa). Intrachain disulfides connect Cys-104-Cys-114 and Cys-131-Cys-140. N-linked (GlcNAc...) asparagine glycosylation is found at Asn-147, Asn-168, Asn-227, and Asn-277. 2 cysteine pairs are disulfide-bonded: Cys-254–Cys-357 and Cys-278–Cys-320. 2 N-linked (GlcNAc...) asparagine glycosylation sites follow: Asn-323 and Asn-367. The 48-residue stretch at 486–533 folds into the PSI domain; sequence RCHFHQTRGACIGAQDPYCGWDAVMKKCTSLEESLSMTQWDQSVPTCP. Residues Asn-536 and Asn-591 are each glycosylated (N-linked (GlcNAc...) asparagine). 3 consecutive TSP type-1 domains span residues 540-593, 595-651, and 653-702; these read DGSF…TNCS, NGGW…LLCP, and HVFW…NACP. 6 disulfides stabilise this stretch: Cys-607-Cys-644, Cys-611-Cys-650, Cys-622-Cys-634, Cys-665-Cys-696, Cys-669-Cys-701, and Cys-680-Cys-686. An N-linked (GlcNAc...) asparagine glycan is attached at Asn-717. TSP type-1 domains follow at residues 784–839, 841–896, and 897–944; these read NGAW…LPCP, DGVW…QTCP, and ENWS…VFDS. 6 cysteine pairs are disulfide-bonded: Cys-796–Cys-833, Cys-800–Cys-838, Cys-811–Cys-823, Cys-853–Cys-890, Cys-857–Cys-895, and Cys-868–Cys-880. N-linked (GlcNAc...) asparagine glycans are attached at residues Asn-898 and Asn-933. The chain crosses the membrane as a helical span at residues 969 to 989; the sequence is FHMMAVGLSSSILGCLLTLLV. An N-linked (GlcNAc...) asparagine glycan is attached at Asn-1015.

Binds PLXNB3.

It is found in the membrane. In terms of biological role, bifunctional axonal guidance cue regulated by sulfated proteoglycans; attractive effects result from interactions with heparan sulfate proteoglycans (HSPGs), while the inhibitory effects depend on interactions with chondroitin sulfate proteoglycans (CSPGs). Ligand for receptor PLXNB3. In glioma cells, SEMA5A stimulation of PLXNB3 results in the disassembly of F-actin stress fibers, disruption of focal adhesions and cellular collapse as well as inhibition of cell migration and invasion through ARHGDIA-mediated inactivation of RAC1. May promote angiogenesis by increasing endothelial cell proliferation and migration and inhibiting apoptosis. The protein is Semaphorin-5A (Sema5a) of Rattus norvegicus (Rat).